The primary structure comprises 102 residues: Large ribosomal subunit protein mL63 (102 aa).

The protein belongs to the mitochondrion-specific ribosomal protein mL63 family. As to quaternary structure, component of the mitochondrial large ribosomal subunit (mt-LSU). Mature mammalian 55S mitochondrial ribosomes consist of a small (28S) and a large (39S) subunit. The 28S small subunit contains a 12S ribosomal RNA (12S mt-rRNA) and 30 different proteins. The 39S large subunit contains a 16S rRNA (16S mt-rRNA), a copy of mitochondrial valine transfer RNA (mt-tRNA(Val)), which plays an integral structural role, and 52 different proteins.

Its subcellular location is the mitochondrion. This is Large ribosomal subunit protein mL63 (MRPL57) from Homo sapiens (Human).